A 346-amino-acid chain; its full sequence is S-adenosylmethionine:tRNA ribosyltransferase-isomerase (346 aa).

The protein belongs to the QueA family. Monomer.

It localises to the cytoplasm. It carries out the reaction 7-aminomethyl-7-carbaguanosine(34) in tRNA + S-adenosyl-L-methionine = epoxyqueuosine(34) in tRNA + adenine + L-methionine + 2 H(+). It participates in tRNA modification; tRNA-queuosine biosynthesis. Transfers and isomerizes the ribose moiety from AdoMet to the 7-aminomethyl group of 7-deazaguanine (preQ1-tRNA) to give epoxyqueuosine (oQ-tRNA). The chain is S-adenosylmethionine:tRNA ribosyltransferase-isomerase from Borreliella afzelii (strain PKo) (Borrelia afzelii).